The primary structure comprises 156 residues: Small ribosomal subunit protein bS16 (156 aa).

The segment covering Gly85–Glu120 has biased composition (basic and acidic residues). Positions Gly85–Glu156 are disordered. A compositionally biased stretch (acidic residues) spans Pro132–Glu150.

Belongs to the bacterial ribosomal protein bS16 family.

The protein is Small ribosomal subunit protein bS16 of Micrococcus luteus (strain ATCC 4698 / DSM 20030 / JCM 1464 / CCM 169 / CCUG 5858 / IAM 1056 / NBRC 3333 / NCIMB 9278 / NCTC 2665 / VKM Ac-2230) (Micrococcus lysodeikticus).